Consider the following 363-residue polypeptide: Cysteine proteinase 15A (363 aa).

Residues 1 to 18 (MDRRFLFALFLFAAVATA) form the signal peptide. Residues 19–131 (VTDDTNNDDF…QKAPILPTTN (113 aa)) constitute a propeptide, activation peptide. Intrachain disulfides connect Cys153–Cys203 and Cys187–Cys236. Cys156 is a catalytic residue. Asn249 is a glycosylation site (N-linked (GlcNAc...) asparagine). A disulfide bridge links Cys292 with Cys347. Catalysis depends on residues His299 and Asn326.

It belongs to the peptidase C1 family.

The chain is Cysteine proteinase 15A from Pisum sativum (Garden pea).